The primary structure comprises 385 residues: UPF0284 protein P9301_04631 (385 aa).

Belongs to the UPF0284 family.

In Prochlorococcus marinus (strain MIT 9301), this protein is UPF0284 protein P9301_04631.